We begin with the raw amino-acid sequence, 332 residues long: Ferredoxin--NADP reductase 2 (332 aa).

FAD contacts are provided by Glu-37, Gln-45, Tyr-50, Val-90, Phe-124, Asp-285, and Thr-326.

The protein belongs to the ferredoxin--NADP reductase type 2 family. Homodimer. It depends on FAD as a cofactor.

It carries out the reaction 2 reduced [2Fe-2S]-[ferredoxin] + NADP(+) + H(+) = 2 oxidized [2Fe-2S]-[ferredoxin] + NADPH. In Bacillus licheniformis (strain ATCC 14580 / DSM 13 / JCM 2505 / CCUG 7422 / NBRC 12200 / NCIMB 9375 / NCTC 10341 / NRRL NRS-1264 / Gibson 46), this protein is Ferredoxin--NADP reductase 2.